Consider the following 227-residue polypeptide: 7-cyano-7-deazaguanine synthase (227 aa).

8-18 is a binding site for ATP; that stretch reads FSGGQDSTTCL. Positions 187, 196, 199, and 202 each coordinate Zn(2+).

It belongs to the QueC family. The cofactor is Zn(2+).

The catalysed reaction is 7-carboxy-7-deazaguanine + NH4(+) + ATP = 7-cyano-7-deazaguanine + ADP + phosphate + H2O + H(+). Its pathway is purine metabolism; 7-cyano-7-deazaguanine biosynthesis. In terms of biological role, catalyzes the ATP-dependent conversion of 7-carboxy-7-deazaguanine (CDG) to 7-cyano-7-deazaguanine (preQ(0)). This chain is 7-cyano-7-deazaguanine synthase, found in Aliivibrio fischeri (strain MJ11) (Vibrio fischeri).